A 282-amino-acid polypeptide reads, in one-letter code: Bifunctional protein FolD (282 aa).

Residues 165-167, Ser190, and Thr231 each bind NADP(+); that span reads GRS.

It belongs to the tetrahydrofolate dehydrogenase/cyclohydrolase family. As to quaternary structure, homodimer.

It catalyses the reaction (6R)-5,10-methylene-5,6,7,8-tetrahydrofolate + NADP(+) = (6R)-5,10-methenyltetrahydrofolate + NADPH. It carries out the reaction (6R)-5,10-methenyltetrahydrofolate + H2O = (6R)-10-formyltetrahydrofolate + H(+). The protein operates within one-carbon metabolism; tetrahydrofolate interconversion. In terms of biological role, catalyzes the oxidation of 5,10-methylenetetrahydrofolate to 5,10-methenyltetrahydrofolate and then the hydrolysis of 5,10-methenyltetrahydrofolate to 10-formyltetrahydrofolate. This Clostridium botulinum (strain Alaska E43 / Type E3) protein is Bifunctional protein FolD.